The chain runs to 236 residues: ATP synthase subunit 4, mitochondrial (236 aa).

A mitochondrion-targeting transit peptide spans 1-29 (MAFRALTTKAAARPLLALGPRSVAMGARY).

This sequence belongs to the eukaryotic ATPase subunit B family. As to quaternary structure, F-type ATPases have 2 components, CF(1) - the catalytic core - and CF(0) - the membrane proton channel. In yeast, the dimeric form of ATP synthase consists of 17 polypeptides: alpha, beta, gamma, delta, epsilon, 4 (B), 5 (OSCP), 6 (A), 8, 9 (C), d, E (Tim11), f, g, h, i/j and k.

The protein resides in the mitochondrion. The protein localises to the mitochondrion inner membrane. Its function is as follows. Mitochondrial membrane ATP synthase (F(1)F(0) ATP synthase or Complex V) produces ATP from ADP in the presence of a proton gradient across the membrane which is generated by electron transport complexes of the respiratory chain. F-type ATPases consist of two structural domains, F(1) - containing the extramembraneous catalytic core, and F(0) - containing the membrane proton channel, linked together by a central stalk and a peripheral stalk. During catalysis, ATP synthesis in the catalytic domain of F(1) is coupled via a rotary mechanism of the central stalk subunits to proton translocation. Part of the complex F(0) domain and the peripheric stalk, which acts as a stator to hold the catalytic alpha(3)beta(3) subcomplex and subunit a/ATP6 static relative to the rotary elements. The polypeptide is ATP synthase subunit 4, mitochondrial (ATP4) (Eremothecium gossypii (strain ATCC 10895 / CBS 109.51 / FGSC 9923 / NRRL Y-1056) (Yeast)).